The primary structure comprises 319 residues: MGLNVLDFEKPILDLEEKINSLTSIVHSDKKSKKNVNAEINRLRSKSIELTQKIFSNLNAWQVAQLARHPRRPYTLDYIERIFNDFDELSGDRVYADDKAIVGGIARLNSRPVMIIGHQKGRDTKEKIKRNFGMSAPEGYRKALRLMKMAERFKIPLITFIDTPGAYPGVGAEKRGQSAAIAKNLRTMSILKIPIICTVIGEGGSGGALAISVGDKVNMLEYSTYSVISPEGCASILWKNVKKAPIAAEAMGITAYRLKELNLIDSVISEPLGGAHRDILTTSISLKTQLLLDLTELDSFDEKELLNRRYQRLMHYGYC.

One can recognise a CoA carboxyltransferase C-terminal domain in the interval 39-296 (EINRLRSKSI…KTQLLLDLTE (258 aa)).

This sequence belongs to the AccA family. In terms of assembly, acetyl-CoA carboxylase is a heterohexamer composed of biotin carboxyl carrier protein (AccB), biotin carboxylase (AccC) and two subunits each of ACCase subunit alpha (AccA) and ACCase subunit beta (AccD).

It is found in the cytoplasm. It catalyses the reaction N(6)-carboxybiotinyl-L-lysyl-[protein] + acetyl-CoA = N(6)-biotinyl-L-lysyl-[protein] + malonyl-CoA. It functions in the pathway lipid metabolism; malonyl-CoA biosynthesis; malonyl-CoA from acetyl-CoA: step 1/1. Its function is as follows. Component of the acetyl coenzyme A carboxylase (ACC) complex. First, biotin carboxylase catalyzes the carboxylation of biotin on its carrier protein (BCCP) and then the CO(2) group is transferred by the carboxyltransferase to acetyl-CoA to form malonyl-CoA. The protein is Acetyl-coenzyme A carboxylase carboxyl transferase subunit alpha of Blochmanniella pennsylvanica (strain BPEN).